The following is a 399-amino-acid chain: MTQSVCILGVTGSIGQSTLKILGQHPDKYSVFAVSAHSRISELVEICKQFRPKVVVVPEQKIAELKTLFAQQNISAIDVLAGQEGLVDIASHTDVDIVMAAIVGAAGLLPTLAAVKAGKRVLLANKEALVMSGEIMMQAARDHQALLLPVDSEHNAIFQSLPHNYLQADRTGQPQLGVSKILLTASGGPFLNHSLEQLVHVTPQKACKHPNWSMGQKISVDSATLMNKGLELIEACHLFSISEHFVTVVVHPQSIIHSMVQYVDGSTLAQMGNPDMCTPIAHALAWPERLQTNVPALDLFEYSQLNFQAPDTQKFPALNLARQAMRAGGLAPTILNAANEIAVEAFLMERIGFTSIPQVVEHTLEKLENTAAESIECILDKDKVARSVAQQYIKYWRLK.

NADPH contacts are provided by Thr11, Gly12, Ser13, Ile14, and Asn125. Lys126 contacts 1-deoxy-D-xylulose 5-phosphate. An NADPH-binding site is contributed by Glu127. Asp151 provides a ligand contact to Mn(2+). The 1-deoxy-D-xylulose 5-phosphate site is built by Ser152, Glu153, Ser186, and His209. A Mn(2+)-binding site is contributed by Glu153. An NADPH-binding site is contributed by Gly215. Positions 222, 227, 228, and 231 each coordinate 1-deoxy-D-xylulose 5-phosphate. Mn(2+) is bound at residue Glu231.

This sequence belongs to the DXR family. Requires Mg(2+) as cofactor. Mn(2+) is required as a cofactor.

The enzyme catalyses 2-C-methyl-D-erythritol 4-phosphate + NADP(+) = 1-deoxy-D-xylulose 5-phosphate + NADPH + H(+). It functions in the pathway isoprenoid biosynthesis; isopentenyl diphosphate biosynthesis via DXP pathway; isopentenyl diphosphate from 1-deoxy-D-xylulose 5-phosphate: step 1/6. Functionally, catalyzes the NADPH-dependent rearrangement and reduction of 1-deoxy-D-xylulose-5-phosphate (DXP) to 2-C-methyl-D-erythritol 4-phosphate (MEP). The chain is 1-deoxy-D-xylulose 5-phosphate reductoisomerase from Acinetobacter baumannii (strain SDF).